Here is a 29-residue protein sequence, read N- to C-terminus: MDIVSFAWAALMVVFTFSLSLVVWGRSGL.

A helical membrane pass occupies residues Ile-3–Val-23.

The protein belongs to the PetN family. As to quaternary structure, the 4 large subunits of the cytochrome b6-f complex are cytochrome b6, subunit IV (17 kDa polypeptide, PetD), cytochrome f and the Rieske protein, while the 4 small subunits are PetG, PetL, PetM and PetN. The complex functions as a dimer.

The protein localises to the plastid. It is found in the chloroplast thylakoid membrane. In terms of biological role, component of the cytochrome b6-f complex, which mediates electron transfer between photosystem II (PSII) and photosystem I (PSI), cyclic electron flow around PSI, and state transitions. The chain is Cytochrome b6-f complex subunit 8 from Phalaenopsis aphrodite subsp. formosana (Moth orchid).